The primary structure comprises 545 residues: Putative transcription factor ecdB (545 aa).

A DNA-binding region (zn(2)-C6 fungal-type) is located at residues 12 to 39; sequence CDACRSRRVKCDGQRPSCMGCLSRGLDC. The segment at 79–99 is disordered; the sequence is PPPVLLASARPSSNPLSSHED.

The protein localises to the nucleus. This chain is Putative transcription factor ecdB, found in Aspergillus rugulosus (Emericella rugulosa).